The sequence spans 49 residues: Large ribosomal subunit protein bL33A (49 aa).

The protein belongs to the bacterial ribosomal protein bL33 family.

In Leuconostoc mesenteroides subsp. mesenteroides (strain ATCC 8293 / DSM 20343 / BCRC 11652 / CCM 1803 / JCM 6124 / NCDO 523 / NBRC 100496 / NCIMB 8023 / NCTC 12954 / NRRL B-1118 / 37Y), this protein is Large ribosomal subunit protein bL33A.